The sequence spans 362 residues: UDP-N-acetylglucosamine--N-acetylmuramyl-(pentapeptide) pyrophosphoryl-undecaprenol N-acetylglucosamine transferase (362 aa).

UDP-N-acetyl-alpha-D-glucosamine-binding positions include 21–23 (TGG), Asn-129, Arg-170, Ser-198, and Gln-290.

Belongs to the glycosyltransferase 28 family. MurG subfamily.

Its subcellular location is the cell inner membrane. It carries out the reaction di-trans,octa-cis-undecaprenyl diphospho-N-acetyl-alpha-D-muramoyl-L-alanyl-D-glutamyl-meso-2,6-diaminopimeloyl-D-alanyl-D-alanine + UDP-N-acetyl-alpha-D-glucosamine = di-trans,octa-cis-undecaprenyl diphospho-[N-acetyl-alpha-D-glucosaminyl-(1-&gt;4)]-N-acetyl-alpha-D-muramoyl-L-alanyl-D-glutamyl-meso-2,6-diaminopimeloyl-D-alanyl-D-alanine + UDP + H(+). The protein operates within cell wall biogenesis; peptidoglycan biosynthesis. Cell wall formation. Catalyzes the transfer of a GlcNAc subunit on undecaprenyl-pyrophosphoryl-MurNAc-pentapeptide (lipid intermediate I) to form undecaprenyl-pyrophosphoryl-MurNAc-(pentapeptide)GlcNAc (lipid intermediate II). This chain is UDP-N-acetylglucosamine--N-acetylmuramyl-(pentapeptide) pyrophosphoryl-undecaprenol N-acetylglucosamine transferase, found in Synechococcus sp. (strain JA-3-3Ab) (Cyanobacteria bacterium Yellowstone A-Prime).